Consider the following 222-residue polypeptide: GTP cyclohydrolase 1 (222 aa).

3 residues coordinate Zn(2+): Cys-111, His-114, and Cys-182.

The protein belongs to the GTP cyclohydrolase I family. Homomer.

It carries out the reaction GTP + H2O = 7,8-dihydroneopterin 3'-triphosphate + formate + H(+). It functions in the pathway cofactor biosynthesis; 7,8-dihydroneopterin triphosphate biosynthesis; 7,8-dihydroneopterin triphosphate from GTP: step 1/1. The sequence is that of GTP cyclohydrolase 1 from Salmonella gallinarum (strain 287/91 / NCTC 13346).